A 588-amino-acid chain; its full sequence is MMRTHYCGALNRNNIGQDVTLSGWVHRRRDLGGLIFIDMRDRDGIVQVCFDPKYQDALTAAAGLRNEFCIQIKGEVIARPDNQINKNMATGEVEVLAKELRIYNASDVLPLDFNQNNTEEQRLKYRYLDLRRPEMAQRLKTRAKITSFVRRFMDDNGFLDIETPMLTKATPEGARDYLVPSRVHKGKFYALPQSPQLFKQLLMMSGFDRYYQIVKCFRDEDLRADRQPEFTQIDVETSFLTAPEVREIMERMVHGLWLDTIGVDLGKFPVMTWQEAMRRFGSDKPDLRNPLEMVDVADIVKDVEFKVFNEPANNPNGRVAVIRVPNGAEITRKQIDEYTQFVGIYGAKGLAWAKVNDINAGLEGVQSPIAKFLNEDVWKGLAERVNAQTGDILFFGADKWQTTTDAMGALRLKLGRDLGLTRLDEWQPLWVIDFPMFERDEEGNLAAMHHPFTSPKDFSPEQLEADPTSAVANAYDMVINGYEVGGGSVRIFDPKMQQTVFRILGIDEEQQREKFGFLLDALKFGTPPHAGLAFGLDRLTMLLTGTENIRDVIAFPKTTAAACLMTEAPSFANPQALEELAISVVKAE.

L-aspartate is bound at residue Glu172. The interval 196 to 199 (QLFK) is aspartate. Arg218 provides a ligand contact to L-aspartate. ATP contacts are provided by residues 218–220 (RDE) and Gln227. His449 is an L-aspartate binding site. Glu483 serves as a coordination point for ATP. Arg490 lines the L-aspartate pocket. Residue 535 to 538 (GLDR) coordinates ATP.

It belongs to the class-II aminoacyl-tRNA synthetase family. Type 1 subfamily. In terms of assembly, homodimer.

It localises to the cytoplasm. It carries out the reaction tRNA(Asp) + L-aspartate + ATP = L-aspartyl-tRNA(Asp) + AMP + diphosphate. Its function is as follows. Catalyzes the attachment of L-aspartate to tRNA(Asp) in a two-step reaction: L-aspartate is first activated by ATP to form Asp-AMP and then transferred to the acceptor end of tRNA(Asp). The polypeptide is Aspartate--tRNA ligase (Haemophilus influenzae (strain ATCC 51907 / DSM 11121 / KW20 / Rd)).